The sequence spans 298 residues: MDNAGKEREAVQLMAEAEKRVKASHSFLRGLFGGNTRIEEACEMYTRAANMFKMAKNWSAAGNAFCQAAKLHMQLQSKHDSATSFVDAGNAYKKADPQEAINCLNAAIDIYTDMGRFTIAAKHHITIAEIYETELVDIEKAIAHYEQSADYYKGEESNSSANKCLLKVAAYAAQLEQYQKAIEIFEQIGANTMDNPLLKYSAKDYFFKAALCHFIVDELNAKLALEKYEEMFPAFTDSRECKLLKKLLEAHEEQNSEAYTEAVKEFDSISRLDQWLTTMLLRIKKSIQGDGEGDGDLK.

It belongs to the SNAP family. As to quaternary structure, interacts with PRKCABP, and disrupts the interaction between GRIA2 and PRKCABP, leading to the internalization of GRIA2. Brain.

The protein localises to the membrane. In terms of biological role, required for vesicular transport between the endoplasmic reticulum and the Golgi apparatus. The protein is Beta-soluble NSF attachment protein (NAPB) of Bos taurus (Bovine).